Here is a 74-residue protein sequence, read N- to C-terminus: Exodeoxyribonuclease 7 small subunit (74 aa).

Belongs to the XseB family. In terms of assembly, heterooligomer composed of large and small subunits.

The protein localises to the cytoplasm. The catalysed reaction is Exonucleolytic cleavage in either 5'- to 3'- or 3'- to 5'-direction to yield nucleoside 5'-phosphates.. Functionally, bidirectionally degrades single-stranded DNA into large acid-insoluble oligonucleotides, which are then degraded further into small acid-soluble oligonucleotides. The polypeptide is Exodeoxyribonuclease 7 small subunit (Bdellovibrio bacteriovorus (strain ATCC 15356 / DSM 50701 / NCIMB 9529 / HD100)).